The primary structure comprises 244 residues: NAD(P)H-quinone oxidoreductase subunit K (244 aa).

4 residues coordinate [4Fe-4S] cluster: cysteine 51, cysteine 52, cysteine 116, and cysteine 147.

The protein belongs to the complex I 20 kDa subunit family. As to quaternary structure, NDH-1 can be composed of about 15 different subunits; different subcomplexes with different compositions have been identified which probably have different functions. It depends on [4Fe-4S] cluster as a cofactor.

The protein localises to the cellular thylakoid membrane. The catalysed reaction is a plastoquinone + NADH + (n+1) H(+)(in) = a plastoquinol + NAD(+) + n H(+)(out). The enzyme catalyses a plastoquinone + NADPH + (n+1) H(+)(in) = a plastoquinol + NADP(+) + n H(+)(out). Its function is as follows. NDH-1 shuttles electrons from an unknown electron donor, via FMN and iron-sulfur (Fe-S) centers, to quinones in the respiratory and/or the photosynthetic chain. The immediate electron acceptor for the enzyme in this species is believed to be plastoquinone. Couples the redox reaction to proton translocation, and thus conserves the redox energy in a proton gradient. Cyanobacterial NDH-1 also plays a role in inorganic carbon-concentration. The polypeptide is NAD(P)H-quinone oxidoreductase subunit K (Synechococcus sp. (strain JA-3-3Ab) (Cyanobacteria bacterium Yellowstone A-Prime)).